Here is a 546-residue protein sequence, read N- to C-terminus: MADTKYIFVTGGVSSSLGKGIIAASLAKLLQARGFKATIQKLDPYINVDPGTLNPYEHGECYVTEDGAETDLDLGHYERFLNVNTSQANNVTTGRIYQSVIEKERRGEFLGKTVQVVPHITNEIKERIQILGKNGDYDIVITEIGGTVGDIESLPYIEAVRQLKWELGDDNALVIHLTLVPYLSAAGELKTKPTQHSVKTLMESGIKADILVCRTEHELSDDIRRKLAIFCNVRQEAVIQSIDARTIYDVPNMMLKEGLDKVTLKKLALPDDSTPNLDRWNQFLQRHKNPKAEVHIGLIGKYVELQDSYKSILESFIHAGAENEVSVNVEYIHSEFINDSTIHNKISHLDGVLVAPGFGERGIEGKIDAVRYARENDLPFLGICLGMQMAVIEFSRNVLQLKGANSTEMDADTKHPVIDLMEAQKEVTHKGGTMRLGAWDCELSKDSIIHAVYGVDKIKERHRHRYEYNNKYKEQLENAGMLSTGINPETGLVEIIELKDHPWFVGVQYHPEYKSTVASPHPLFVSFVKAAHEHSVKQKNAKMAQK.

Residues 1-269 are amidoligase domain; it reads MADTKYIFVT…DKVTLKKLAL (269 aa). Ser-15 serves as a coordination point for CTP. Ser-15 is a binding site for UTP. 16-21 lines the ATP pocket; the sequence is SLGKGI. Position 56 (Tyr-56) interacts with L-glutamine. Asp-73 contributes to the ATP binding site. Mg(2+) is bound by residues Asp-73 and Glu-143. Residues 150-152, 190-195, and Lys-226 each bind CTP; these read DIE and KTKPTQ. UTP contacts are provided by residues 190-195 and Lys-226; that span reads KTKPTQ. Positions 295-537 constitute a Glutamine amidotransferase type-1 domain; the sequence is HIGLIGKYVE…VKAAHEHSVK (243 aa). Residue Gly-357 coordinates L-glutamine. Catalysis depends on Cys-384, which acts as the Nucleophile; for glutamine hydrolysis. L-glutamine is bound by residues 385–388, Glu-408, and Arg-465; that span reads LGMQ. Residues His-510 and Glu-512 contribute to the active site.

It belongs to the CTP synthase family. In terms of assembly, homotetramer.

The catalysed reaction is UTP + L-glutamine + ATP + H2O = CTP + L-glutamate + ADP + phosphate + 2 H(+). It catalyses the reaction L-glutamine + H2O = L-glutamate + NH4(+). It carries out the reaction UTP + NH4(+) + ATP = CTP + ADP + phosphate + 2 H(+). It participates in pyrimidine metabolism; CTP biosynthesis via de novo pathway; CTP from UDP: step 2/2. With respect to regulation, allosterically activated by GTP, when glutamine is the substrate; GTP has no effect on the reaction when ammonia is the substrate. The allosteric effector GTP functions by stabilizing the protein conformation that binds the tetrahedral intermediate(s) formed during glutamine hydrolysis. Inhibited by the product CTP, via allosteric rather than competitive inhibition. Catalyzes the ATP-dependent amination of UTP to CTP with either L-glutamine or ammonia as the source of nitrogen. Regulates intracellular CTP levels through interactions with the four ribonucleotide triphosphates. This Christiangramia forsetii (strain DSM 17595 / CGMCC 1.15422 / KT0803) (Gramella forsetii) protein is CTP synthase.